The chain runs to 506 residues: Ribose import ATP-binding protein RbsA (506 aa).

2 ABC transporter domains span residues V5–P237 and P249–E492. G37–S44 contacts ATP.

The protein belongs to the ABC transporter superfamily. Ribose importer (TC 3.A.1.2.1) family. As to quaternary structure, the complex is composed of an ATP-binding protein (RbsA), two transmembrane proteins (RbsC) and a solute-binding protein (RbsB).

The protein localises to the cell inner membrane. The enzyme catalyses D-ribose(out) + ATP + H2O = D-ribose(in) + ADP + phosphate + H(+). Part of the ABC transporter complex RbsABC involved in ribose import. Responsible for energy coupling to the transport system. The sequence is that of Ribose import ATP-binding protein RbsA from Chelativorans sp. (strain BNC1).